The sequence spans 1338 residues: Vascular endothelial growth factor receptor 1 (1338 aa).

The signal sequence occupies residues 1–26 (MVSYWDTGVLLCALLSCLLLTGSSSG). At 27-758 (SKLKDPELSL…QGTSDKSNLE (732 aa)) the chain is on the extracellular side. 7 consecutive Ig-like C2-type domains span residues 32–123 (PELS…TESA), 151–214 (GREL…VNGH), 230–327 (IDVQ…TSVH), 335–421 (TVKH…LTAT), 428–553 (PQIY…FYIT), 556–654 (PNGF…KEIT), and 661–747 (PYLL…AYLT). Cystine bridges form between cysteine 53–cysteine 107 and cysteine 158–cysteine 207. 4 N-linked (GlcNAc...) asparagine glycosylation sites follow: asparagine 100, asparagine 164, asparagine 196, and asparagine 251. An intrachain disulfide couples cysteine 252 to cysteine 311. Asparagine 323, asparagine 402, asparagine 417, asparagine 474, asparagine 547, asparagine 597, asparagine 620, asparagine 625, and asparagine 666 each carry an N-linked (GlcNAc...) asparagine glycan. Cysteine 454 and cysteine 535 are disulfide-bonded. Cysteine 577 and cysteine 636 are joined by a disulfide. Cysteines 682 and 731 form a disulfide. Residues 759-780 (LITLTCTCVAATLFWLLLTLFI) form a helical membrane-spanning segment. Residues 781–1338 (RKMKRSSSEI…SVVLYSTPPI (558 aa)) are Cytoplasmic-facing. The 332-residue stretch at 827–1158 (LKLGKSLGRG…ELVEKLGDLL (332 aa)) folds into the Protein kinase domain. ATP contacts are provided by residues 833–841 (LGRGAFGKV) and lysine 861. The residue at position 914 (tyrosine 914) is a Phosphotyrosine; by autocatalysis. The span at 940–957 (PKKEKMEPGLEQGKKPRL) shows a compositional bias: basic and acidic residues. The tract at residues 940-982 (PKKEKMEPGLEQGKKPRLDSVTSSESFASSGFQEDKSLSDVEE) is disordered. Residues 959 to 971 (SVTSSESFASSGF) show a composition bias toward polar residues. The Proton acceptor role is filled by aspartate 1022. Residues tyrosine 1053, tyrosine 1169, tyrosine 1213, tyrosine 1242, tyrosine 1309, tyrosine 1327, and tyrosine 1333 each carry the phosphotyrosine; by autocatalysis modification.

This sequence belongs to the protein kinase superfamily. Tyr protein kinase family. CSF-1/PDGF receptor subfamily. In terms of assembly, interacts with VEGFA, VEGFB and PGF. Monomer in the absence of bound VEGFA, VEGFB or PGF. Homodimer in the presence of bound VEGFA, VEGFB and PGF. Can also form a heterodimer with KDR. Interacts (when tyrosine phosphorylated) with CBL, CRK, GRB2, NCK1, PIK3R1, PLCG, PSEN1 and PTPN11. Probably also interacts with PTPRB. Interacts with RACK1. Identified in a complex with CBL and CD2AP. Post-translationally, N-glycosylated. Ubiquitinated after VEGFA-mediated autophosphorylation, leading to proteolytic degradation. In terms of processing, autophosphorylated on tyrosine residues upon ligand binding. Autophosphorylation occurs in trans, i.e. one subunit of the dimeric receptor phosphorylates tyrosine residues on the other subunit. Phosphorylation at Tyr-1169 is important for interaction with PLCG. Phosphorylation at Tyr-1213 is important for interaction with PIK3R1, PTPN11, GRB2, and PLCG. Phosphorylation at Tyr-1333 is important for endocytosis and for interaction with CBL, NCK1 and CRK. Is probably dephosphorylated by PTPRB. Detected in normal lung, but also in placenta, liver, kidney, heart and brain tissues. Specifically expressed in most of the vascular endothelial cells, and also expressed in peripheral blood monocytes. Isoform 2 is strongly expressed in placenta. Isoform 3 is expressed in corneal epithelial cells (at protein level). Isoform 3 is expressed in vascular smooth muscle cells (VSMC).

It localises to the cell membrane. Its subcellular location is the endosome. The protein localises to the secreted. The protein resides in the cytoplasm. It carries out the reaction L-tyrosyl-[protein] + ATP = O-phospho-L-tyrosyl-[protein] + ADP + H(+). Its activity is regulated as follows. Present in an inactive conformation in the absence of bound ligand. Binding of VEGFA, VEGFB or PGF leads to dimerization and activation by autophosphorylation on tyrosine residues. Functionally, tyrosine-protein kinase that acts as a cell-surface receptor for VEGFA, VEGFB and PGF, and plays an essential role in the development of embryonic vasculature, the regulation of angiogenesis, cell survival, cell migration, macrophage function, chemotaxis, and cancer cell invasion. Acts as a positive regulator of postnatal retinal hyaloid vessel regression. May play an essential role as a negative regulator of embryonic angiogenesis by inhibiting excessive proliferation of endothelial cells. Can promote endothelial cell proliferation, survival and angiogenesis in adulthood. Its function in promoting cell proliferation seems to be cell-type specific. Promotes PGF-mediated proliferation of endothelial cells, proliferation of some types of cancer cells, but does not promote proliferation of normal fibroblasts (in vitro). Has very high affinity for VEGFA and relatively low protein kinase activity; may function as a negative regulator of VEGFA signaling by limiting the amount of free VEGFA and preventing its binding to KDR. Modulates KDR signaling by forming heterodimers with KDR. Ligand binding leads to the activation of several signaling cascades. Activation of PLCG leads to the production of the cellular signaling molecules diacylglycerol and inositol 1,4,5-trisphosphate and the activation of protein kinase C. Mediates phosphorylation of PIK3R1, the regulatory subunit of phosphatidylinositol 3-kinase, leading to activation of phosphatidylinositol kinase and the downstream signaling pathway. Mediates activation of MAPK1/ERK2, MAPK3/ERK1 and the MAP kinase signaling pathway, as well as of the AKT1 signaling pathway. Phosphorylates SRC and YES1, and may also phosphorylate CBL. Promotes phosphorylation of AKT1 at 'Ser-473'. Promotes phosphorylation of PTK2/FAK1. In terms of biological role, phosphorylates PLCG. May function as decoy receptor for VEGFA. Its function is as follows. Has a truncated kinase domain; it increases phosphorylation of SRC at 'Tyr-418' by unknown means and promotes tumor cell invasion. This chain is Vascular endothelial growth factor receptor 1 (FLT1), found in Homo sapiens (Human).